We begin with the raw amino-acid sequence, 646 residues long: Threonine--tRNA ligase (646 aa).

Residues 1 to 63 (MAQISLTFPD…ETDAKIAIHT (63 aa)) form the TGS domain. Residues 247 to 544 (DHRKLGREME…LIENYAGKLP (298 aa)) form a catalytic region. Zn(2+) contacts are provided by C344, H395, and H521.

The protein belongs to the class-II aminoacyl-tRNA synthetase family. As to quaternary structure, homodimer. Requires Zn(2+) as cofactor.

It localises to the cytoplasm. The catalysed reaction is tRNA(Thr) + L-threonine + ATP = L-threonyl-tRNA(Thr) + AMP + diphosphate + H(+). In terms of biological role, catalyzes the attachment of threonine to tRNA(Thr) in a two-step reaction: L-threonine is first activated by ATP to form Thr-AMP and then transferred to the acceptor end of tRNA(Thr). Also edits incorrectly charged L-seryl-tRNA(Thr). This is Threonine--tRNA ligase from Cereibacter sphaeroides (strain ATCC 17023 / DSM 158 / JCM 6121 / CCUG 31486 / LMG 2827 / NBRC 12203 / NCIMB 8253 / ATH 2.4.1.) (Rhodobacter sphaeroides).